The sequence spans 158 residues: NADH-quinone oxidoreductase subunit B (158 aa).

[4Fe-4S] cluster-binding residues include Cys-37, Cys-38, Cys-102, and Cys-132.

It belongs to the complex I 20 kDa subunit family. As to quaternary structure, NDH-1 is composed of 14 different subunits. Subunits NuoB, C, D, E, F, and G constitute the peripheral sector of the complex. Requires [4Fe-4S] cluster as cofactor.

The protein localises to the cell inner membrane. The catalysed reaction is a quinone + NADH + 5 H(+)(in) = a quinol + NAD(+) + 4 H(+)(out). NDH-1 shuttles electrons from NADH, via FMN and iron-sulfur (Fe-S) centers, to quinones in the respiratory chain. Couples the redox reaction to proton translocation (for every two electrons transferred, four hydrogen ions are translocated across the cytoplasmic membrane), and thus conserves the redox energy in a proton gradient. This Bordetella avium (strain 197N) protein is NADH-quinone oxidoreductase subunit B.